The following is a 506-amino-acid chain: Protein EFFECTOR OF TRANSCRIPTION 1 (506 aa).

One can recognise a GIY-YIG domain in the interval 185 to 225 (AFQGLYELSHDHGRKDDVLVANLGQPESIRSRLRSYSRSFA). Positions 234–247 (LSQTILPTTQNKSD) are enriched in polar residues. Residues 234 to 298 (LSQTILPTTQ…VSEKHDDIVD (65 aa)) form a disordered region. Over residues 248-272 (NQTEEKKSDSEEEREVSSDAAEKES) the composition is skewed to basic and acidic residues. Low complexity predominate over residues 273 to 288 (NSLPSILRLSRSRPQP). Cx9Cx9RCx2HK repeat units lie at residues 306 to 331 (CGVL…TEHK) and 361 to 386 (CGVI…EDHK). A compositionally biased stretch (basic and acidic residues) spans 404 to 413 (KAVNEDKSKP). The interval 404–426 (KAVNEDKSKPETSTGMNQEGSGL) is disordered. Over residues 414-423 (ETSTGMNQEG) the composition is skewed to polar residues. Cx9Cx9RCx2HK repeat units lie at residues 428-453 (CEAT…WQHK) and 475-500 (CGFK…EEHK).

As to expression, expressed in rosette leaves, stipules, stems, flowers, siliques and mature seeds. Expressed in the vascular bundles of xylem in shoot parenchyma cells. Expressed in the remnant cytoplasm of differentiated fiber cells and in protoxylem element of parenchymal cells.

Its subcellular location is the cytoplasm. It is found in the nucleus. Transcriptional regulator involved in the regulation of cell differentiation in meristems. Binds DNA without sequence preference. The polypeptide is Protein EFFECTOR OF TRANSCRIPTION 1 (Arabidopsis thaliana (Mouse-ear cress)).